Consider the following 127-residue polypeptide: Fluoride-specific ion channel FluC (127 aa).

Transmembrane regions (helical) follow at residues 4 to 24, 35 to 55, 71 to 91, and 103 to 123; these read LLLAVFIGGGTGSVARWLLSM, LGTLTANLIGAFIIGMGFAWF, TGFCGGLTTFSTFSAEVVFLL, and VFVNLLGSFAMTALAFWLFSA. Residues Gly-75 and Thr-78 each coordinate Na(+).

It belongs to the fluoride channel Fluc/FEX (TC 1.A.43) family.

The protein localises to the cell inner membrane. It catalyses the reaction fluoride(in) = fluoride(out). Its activity is regulated as follows. Na(+) is not transported, but it plays an essential structural role and its presence is essential for fluoride channel function. Functionally, fluoride-specific ion channel. Important for reducing fluoride concentration in the cell, thus reducing its toxicity. This is Fluoride-specific ion channel FluC from Escherichia coli (strain ATCC 8739 / DSM 1576 / NBRC 3972 / NCIMB 8545 / WDCM 00012 / Crooks).